We begin with the raw amino-acid sequence, 395 residues long: Ribosomal RNA small subunit methyltransferase H (395 aa).

S-adenosyl-L-methionine is bound by residues 101–103, Asp-120, Tyr-147, Asp-171, and Gln-178; that span reads GGH.

It belongs to the methyltransferase superfamily. RsmH family.

It is found in the cytoplasm. The catalysed reaction is cytidine(1402) in 16S rRNA + S-adenosyl-L-methionine = N(4)-methylcytidine(1402) in 16S rRNA + S-adenosyl-L-homocysteine + H(+). In terms of biological role, specifically methylates the N4 position of cytidine in position 1402 (C1402) of 16S rRNA. In Mycobacterium marinum (strain ATCC BAA-535 / M), this protein is Ribosomal RNA small subunit methyltransferase H.